The following is a 320-amino-acid chain: Malate dehydrogenase (320 aa).

Residues 10–15 (GSGMIG) and Asp-34 contribute to the NAD(+) site. Substrate is bound by residues Arg-83 and Arg-89. Residues Asn-96 and 119–121 (ITN) each bind NAD(+). Substrate contacts are provided by Asn-121 and Arg-152. His-176 (proton acceptor) is an active-site residue.

It belongs to the LDH/MDH superfamily. MDH type 3 family.

The enzyme catalyses (S)-malate + NAD(+) = oxaloacetate + NADH + H(+). Catalyzes the reversible oxidation of malate to oxaloacetate. The protein is Malate dehydrogenase of Rhizobium etli (strain CIAT 652).